The following is a 281-amino-acid chain: Bifunctional protein FolD (281 aa).

NADP(+)-binding positions include 165–167, threonine 192, and valine 233; that span reads GRG.

This sequence belongs to the tetrahydrofolate dehydrogenase/cyclohydrolase family. Homodimer.

It carries out the reaction (6R)-5,10-methylene-5,6,7,8-tetrahydrofolate + NADP(+) = (6R)-5,10-methenyltetrahydrofolate + NADPH. It catalyses the reaction (6R)-5,10-methenyltetrahydrofolate + H2O = (6R)-10-formyltetrahydrofolate + H(+). It functions in the pathway one-carbon metabolism; tetrahydrofolate interconversion. Its function is as follows. Catalyzes the oxidation of 5,10-methylenetetrahydrofolate to 5,10-methenyltetrahydrofolate and then the hydrolysis of 5,10-methenyltetrahydrofolate to 10-formyltetrahydrofolate. The sequence is that of Bifunctional protein FolD from Mycobacterium marinum (strain ATCC BAA-535 / M).